A 258-amino-acid chain; its full sequence is MKTLVIASLSGGQGKTTTAFFLGKLLSQSAKVLFIDADPQSNLTFFLGHEVEPSAPTLLELIKDMVEPADAVYSLANSNQFLIPSDDGLSNAQEYLASSGMGAVVLKARLKPLSEYFDYCIIDSPPARTQISIATIGAADQLLIPAEASTKGVNSLIRTLEIVQSLEKLGAFTGSILGVIPFRDKWFGLSQSKDSAGAIAAMKEVAPQLRIFPSILESERYKQALNQGILLSELGYPDLEKPFEGVKEALGIKQLVQI.

ATP contacts are provided by Gly11, Gly12, Gln13, Gly14, Lys15, Thr16, Thr17, Gln40, Glu147, Lys151, Phe182, Arg183, Leu216, Glu217, Ser218, and Tyr221. Thr16 is a Mg(2+) binding site.

It belongs to the ParA family. McdA subfamily. Homodimerizes in the presence of ATP, making extra nucleotide contacts than with ADP or AMP-PNP. Each subunit binds 1 ATP molecule; Glu-147, Lys-151 and Arg-183 cross the dimer interface to contact ATP in the other subunit, while Phe-182, Arg-183 and Tyr-221 stack with the adenine base in their own subunit. Forms a complex with McdB.

The protein localises to the cytoplasm. It is found in the nucleoid. The catalysed reaction is ATP + H2O = ADP + phosphate + H(+). Functionally, mcdA and McdB together mediate carboxysome (Cb) spacing, size, ultrastructure and probably inheritance in the cell, together they prevent Cb aggregation. McdA is an ATPase that forms dynamic gradients on the nucleoid in response to adapter protein McdB, which associates with carboxysomes. The interplay between McdA gradients on the nucleoid and McdB-bound carboxysomes result in the equal spacing of Cbs along the cell length. Binds DNA saturably and strongly in the presence of Mg(2+)ATP; without ATP, DNA-binding is very poor (tested with a mutant that should not be able to hydrolyze ATP, Asp-38-Ala). Decreasing the NaCl concentration increases DNA binding. Its function is as follows. Incorrect positioning (aggregation) of carboxysomes results in reduced CO(2) fixation by encapsulated ribulose-1,5-bisphosphate carboxylase (RuBisCO, cbbL/cbbS), which leads to slower growth. The polypeptide is Maintenance of carboxysome distribution protein A (Gloeothece citriformis (strain PCC 7424) (Cyanothece sp. (strain PCC 7424))).